An 84-amino-acid polypeptide reads, in one-letter code: Toxin BmKaTx16 (84 aa).

Positions 1 to 19 (MNYLVMISFALLLMTGVES) are cleaved as a signal peptide. One can recognise an LCN-type CS-alpha/beta domain in the interval 21–83 (RDAYIAKPHN…VPIRVPGKCH (63 aa)). 4 cysteine pairs are disulfide-bonded: Cys-31-Cys-82, Cys-35-Cys-55, Cys-41-Cys-65, and Cys-45-Cys-67. Residue Arg-84 is a propeptide, removed by a carboxypeptidase.

This sequence belongs to the long (4 C-C) scorpion toxin superfamily. Sodium channel inhibitor family. Alpha subfamily. Expressed by the venom gland.

It localises to the secreted. Alpha toxins bind voltage-independently at site-3 of sodium channels (Nav) and inhibit the inactivation of the activated channels, thereby blocking neuronal transmission. The protein is Toxin BmKaTx16 of Olivierus martensii (Manchurian scorpion).